The sequence spans 220 residues: Small ribosomal subunit protein mS42 (220 aa).

Belongs to the mitochondrion-specific ribosomal protein mS42 family. Component of the mitochondrial small ribosomal subunit (mt-SSU). Mature yeast 74S mitochondrial ribosomes consist of a small (37S) and a large (54S) subunit. The 37S small subunit contains a 15S ribosomal RNA (15S mt-rRNA) and at least 32 different proteins. The 54S large subunit contains a 21S rRNA (21S mt-rRNA) and at least 45 different proteins. mS43 forms a dimer with mS42, building a large protuberance adjacent to the mRNA channel exit in the mt-SSU body.

The protein localises to the mitochondrion. Its function is as follows. Component of the mitochondrial ribosome (mitoribosome), a dedicated translation machinery responsible for the synthesis of mitochondrial genome-encoded proteins, including at least some of the essential transmembrane subunits of the mitochondrial respiratory chain. The mitoribosomes are attached to the mitochondrial inner membrane and translation products are cotranslationally integrated into the membrane. The sequence is that of Small ribosomal subunit protein mS42 from Schizosaccharomyces pombe (strain 972 / ATCC 24843) (Fission yeast).